The chain runs to 263 residues: Endonuclease 8 (263 aa).

The active-site Schiff-base intermediate with DNA is proline 2. The active-site Proton donor is the glutamate 3. Lysine 53 functions as the Proton donor; for beta-elimination activity in the catalytic mechanism. Positions 70, 125, and 169 each coordinate DNA. The FPG-type zinc finger occupies 229–263; it reads KVFHRDGEPCERCGGIIEKTTLSSRPFYWCPGCQH. Arginine 253 serves as the catalytic Proton donor; for delta-elimination activity.

Belongs to the FPG family. Zn(2+) serves as cofactor.

The enzyme catalyses 2'-deoxyribonucleotide-(2'-deoxyribose 5'-phosphate)-2'-deoxyribonucleotide-DNA = a 3'-end 2'-deoxyribonucleotide-(2,3-dehydro-2,3-deoxyribose 5'-phosphate)-DNA + a 5'-end 5'-phospho-2'-deoxyribonucleoside-DNA + H(+). In terms of biological role, involved in base excision repair of DNA damaged by oxidation or by mutagenic agents. Acts as a DNA glycosylase that recognizes and removes damaged bases. Has a preference for oxidized pyrimidines, such as thymine glycol, 5,6-dihydrouracil and 5,6-dihydrothymine. Has AP (apurinic/apyrimidinic) lyase activity and introduces nicks in the DNA strand. Cleaves the DNA backbone by beta-delta elimination to generate a single-strand break at the site of the removed base with both 3'- and 5'-phosphates. The sequence is that of Endonuclease 8 from Escherichia coli O6:K15:H31 (strain 536 / UPEC).